Consider the following 391-residue polypeptide: ATP phosphoribosyltransferase regulatory subunit (391 aa).

This sequence belongs to the class-II aminoacyl-tRNA synthetase family. HisZ subfamily. In terms of assembly, heteromultimer composed of HisG and HisZ subunits.

The protein resides in the cytoplasm. It participates in amino-acid biosynthesis; L-histidine biosynthesis; L-histidine from 5-phospho-alpha-D-ribose 1-diphosphate: step 1/9. Its function is as follows. Required for the first step of histidine biosynthesis. May allow the feedback regulation of ATP phosphoribosyltransferase activity by histidine. The protein is ATP phosphoribosyltransferase regulatory subunit of Bacillus licheniformis (strain ATCC 14580 / DSM 13 / JCM 2505 / CCUG 7422 / NBRC 12200 / NCIMB 9375 / NCTC 10341 / NRRL NRS-1264 / Gibson 46).